The sequence spans 152 residues: Nucleoside diphosphate kinase (152 aa).

6 residues coordinate ATP: Lys-9, Phe-57, Arg-85, Thr-91, Arg-102, and Asn-112. Residue His-115 is the Pros-phosphohistidine intermediate of the active site.

This sequence belongs to the NDK family. In terms of assembly, homotetramer. The cofactor is Mg(2+).

It localises to the cytoplasm. It catalyses the reaction a 2'-deoxyribonucleoside 5'-diphosphate + ATP = a 2'-deoxyribonucleoside 5'-triphosphate + ADP. The catalysed reaction is a ribonucleoside 5'-diphosphate + ATP = a ribonucleoside 5'-triphosphate + ADP. In terms of biological role, major role in the synthesis of nucleoside triphosphates other than ATP. The ATP gamma phosphate is transferred to the NDP beta phosphate via a ping-pong mechanism, using a phosphorylated active-site intermediate. This chain is Nucleoside diphosphate kinase, found in Rhodopirellula baltica (strain DSM 10527 / NCIMB 13988 / SH1).